The primary structure comprises 216 residues: Protein-L-isoaspartate O-methyltransferase (216 aa).

The active site involves Ser65.

The protein belongs to the methyltransferase superfamily. L-isoaspartyl/D-aspartyl protein methyltransferase family.

It localises to the cytoplasm. It carries out the reaction [protein]-L-isoaspartate + S-adenosyl-L-methionine = [protein]-L-isoaspartate alpha-methyl ester + S-adenosyl-L-homocysteine. Its function is as follows. Catalyzes the methyl esterification of L-isoaspartyl residues in peptides and proteins that result from spontaneous decomposition of normal L-aspartyl and L-asparaginyl residues. It plays a role in the repair and/or degradation of damaged proteins. The chain is Protein-L-isoaspartate O-methyltransferase from Chlorobium phaeobacteroides (strain DSM 266 / SMG 266 / 2430).